We begin with the raw amino-acid sequence, 479 residues long: NADH oxidase (479 aa).

FAD is bound by residues 8–12 (GVNHA), Asp-33, Cys-43, Val-80, 111–114 (ASGA), Lys-149, and Tyr-177. The active-site Proton acceptor is the His-11. Residue Cys-43 is the Redox-active of the active site. Cysteine sulfinic acid (-SO2H) is present on Cys-43. Residues 170 to 185 (VAIV…LAEA), Asp-197, and Gly-264 contribute to the NAD(+) site. Residues 295–305 (LNHENVYVIGG), Leu-322, Ala-323, and Thr-324 contribute to the FAD site. Ala-353 is an NAD(+) binding site. FAD is bound at residue Phe-450.

The protein belongs to the class-III pyridine nucleotide-disulfide oxidoreductase family. Requires FAD as cofactor.

It catalyses the reaction 2 NADH + O2 + 2 H(+) = 2 NAD(+) + 2 H2O. Functionally, catalyzes the four-electron reduction of molecular oxygen to water. This is NADH oxidase (nox) from Mycoplasma pneumoniae (strain ATCC 29342 / M129 / Subtype 1) (Mycoplasmoides pneumoniae).